A 768-amino-acid chain; its full sequence is Ribosomal RNA large subunit methyltransferase K/L (768 aa).

In terms of domain architecture, THUMP spans 60–175 (DLYKICLWSR…DKQAELYLDL (116 aa)).

This sequence belongs to the methyltransferase superfamily. RlmKL family.

It is found in the cytoplasm. The enzyme catalyses guanosine(2445) in 23S rRNA + S-adenosyl-L-methionine = N(2)-methylguanosine(2445) in 23S rRNA + S-adenosyl-L-homocysteine + H(+). It catalyses the reaction guanosine(2069) in 23S rRNA + S-adenosyl-L-methionine = N(2)-methylguanosine(2069) in 23S rRNA + S-adenosyl-L-homocysteine + H(+). Its function is as follows. Specifically methylates the guanine in position 2445 (m2G2445) and the guanine in position 2069 (m7G2069) of 23S rRNA. This Psychrobacter arcticus (strain DSM 17307 / VKM B-2377 / 273-4) protein is Ribosomal RNA large subunit methyltransferase K/L.